A 179-amino-acid chain; its full sequence is PP2C-like domain-containing protein R307 (179 aa).

The 176-residue stretch at 1–176 (MNESKRENIQ…DNVSVIIIFF (176 aa)) folds into the PPM-type phosphatase domain.

The protein resides in the virion. The polypeptide is PP2C-like domain-containing protein R307 (Acanthamoeba polyphaga mimivirus (APMV)).